The sequence spans 294 residues: Putative inactive magnesium transporter MRS2-8 (294 aa).

The stretch at 179 to 216 forms a coiled coil; the sequence is KLKSSMTRLTAQVQKIKDELEQLLEDDEDMAELYLSRK.

The protein belongs to the CorA metal ion transporter (MIT) (TC 1.A.35.5) family.

This Arabidopsis thaliana (Mouse-ear cress) protein is Putative inactive magnesium transporter MRS2-8 (MRS2-8).